The primary structure comprises 316 residues: Beta-agarase (316 aa).

An N-terminal signal peptide occupies residues M1–A18. In terms of domain architecture, GH16 spans Y27–E315. Residues W78, Q87–F97, and R101–S103 each bind substrate. E167 serves as the catalytic Nucleophile. The active-site Proton donor is the E172. R197 provides a ligand contact to substrate.

The protein belongs to the glycosyl hydrolase 16 family.

The catalysed reaction is Hydrolysis of (1-&gt;4)-beta-D-galactosidic linkages in agarose, giving the tetramer as the predominant product.. In terms of biological role, cleaves the beta-1,4-linkages between beta-D-galactose and alpha-L-3,6-anhydro-galactose residues in agarose. Cleaves agarose in a random manner with retention of the anomeric-bond configuration, producing beta-anomers that give rise progressively to alpha-anomers when mutarotation takes place. This chain is Beta-agarase, found in Phocaeicola plebeius (strain DSM 17135 / JCM 12973 / CCUG 54634 / M2) (Bacteroides plebeius).